The primary structure comprises 1155 residues: PAN2-PAN3 deadenylation complex catalytic subunit pan2 (1155 aa).

WD repeat units lie at residues 102–145 (THED…DKLP) and 276–315 (ANVSFMLGIDLSPSGEALAINDAECAIHLWGSPSKVHFNE). Positions 316 to 452 (MSKEVEFADV…GTKLNGEAED (137 aa)) are linker. Residues 453–822 (DPLLKYSNVE…VPCVLAYQVK (370 aa)) form the USP domain. One can recognise an Exonuclease domain in the interval 871–1049 (VALDTEFVDL…IEDARMALRL (179 aa)). A divalent metal cation-binding residues include aspartate 874, glutamate 876, aspartate 983, and aspartate 1042. The disordered stretch occupies residues 1095-1155 (TAVTMQNNSG…GDFFGGSPLK (61 aa)). Residues 1097 to 1106 (VTMQNNSGRN) show a composition bias toward polar residues. Low complexity predominate over residues 1107-1124 (TPSTPEVTAPTASAPTTP).

The protein belongs to the peptidase C19 family. PAN2 subfamily. Forms a heterotrimer with an asymmetric homodimer of the regulatory subunit pan3 to form the poly(A)-nuclease (PAN) deadenylation complex. A divalent metal cation is required as a cofactor.

The protein resides in the cytoplasm. It carries out the reaction Exonucleolytic cleavage of poly(A) to 5'-AMP.. Its activity is regulated as follows. Positively regulated by the regulatory subunit pan3. Functionally, catalytic subunit of the poly(A)-nuclease (PAN) deadenylation complex, one of two cytoplasmic mRNA deadenylases involved in mRNA turnover. PAN specifically shortens poly(A) tails of RNA and the activity is stimulated by poly(A)-binding protein pab1. PAN deadenylation is followed by rapid degradation of the shortened mRNA tails by the CCR4-NOT complex. Deadenylated mRNAs are then degraded by two alternative mechanisms, namely exosome-mediated 3'-5' exonucleolytic degradation, or deadenylation-dependent mRNA decaping and subsequent 5'-3' exonucleolytic degradation by xrn1. May also be involved in post-transcriptional maturation of mRNA poly(A) tails. In Aspergillus oryzae (strain ATCC 42149 / RIB 40) (Yellow koji mold), this protein is PAN2-PAN3 deadenylation complex catalytic subunit pan2.